Here is a 251-residue protein sequence, read N- to C-terminus: Capsid protein (251 aa).

A Bipartite nuclear localization signal motif is present at residues lysine 3–asparagine 20. A Nuclear localization signal motif is present at residues lysine 35–arginine 49. Residues cysteine 63–histidine 80 fold into a zinc finger. The Nuclear export signal signature appears at isoleucine 96–methionine 117. A Bipartite nuclear localization signal motif is present at residues lysine 195–arginine 242.

It belongs to the geminiviridae capsid protein family. Homomultimer. Binds to single-stranded and double-stranded viral DNA. Interacts (via nuclear localization signals) with host importin alpha-1a.

It localises to the virion. The protein resides in the host nucleus. Its function is as follows. Encapsidates the viral DNA into characteristic twinned ('geminate') particles. Binds the genomic viral ssDNA and shuttles it into and out of the cell nucleus. The CP of bipartite geminiviruses is not required for cell-to-cell or systemic movement. This is Capsid protein from Tomato mottle virus (isolate Florida) (ToMoV).